A 211-amino-acid chain; its full sequence is NEDD4 family-interacting protein 1 (211 aa).

The span at 1 to 13 (MSEQSSSRYQQLQ) shows a compositional bias: polar residues. The interval 1–48 (MSEQSSSRYQQLQNEEEPGENPQASTDAPPPYSSIAGESSGLFDYKDE) is disordered. Residues 1–106 (MSEQSSSRYQ…ADQLRIGNDG (106 aa)) lie on the Cytoplasmic side of the membrane. Short sequence motifs (PPxY motif) lie at residues 29-32 (PPPY) and 54-57 (PPSY). A helical membrane pass occupies residues 107–127 (IFMLTFFMAFLFNWIGFFLSF). Residues 128-133 (CLTSSA) lie on the Extracellular side of the membrane. A helical membrane pass occupies residues 134–154 (AGRYGAISGFGLSLIKWILIV). Residues 155 to 162 (RFSTYFPG) are Cytoplasmic-facing. Residues 163 to 183 (YFDGQYWLWWVFLVLGFLLFL) traverse the membrane as a helical segment. The Extracellular portion of the chain corresponds to 184–211 (RGFINYAKVRKMPDNFSTLPRTRVLFIY).

It is found in the golgi apparatus membrane. Its function is as follows. May play a role in Golgi structure maintenance. In Xenopus tropicalis (Western clawed frog), this protein is NEDD4 family-interacting protein 1 (ndfip1).